A 402-amino-acid chain; its full sequence is Propionate kinase (402 aa).

ATP contacts are provided by Asn11 and Lys18. Asn11 contributes to the Mg(2+) binding site. Residue Arg86 participates in substrate binding. Asp143 serves as the catalytic Proton donor/acceptor. ATP-binding positions include His175, 203–207 (HLGNG), 278–280 (DLR), and 326–330 (GIGEN).

This sequence belongs to the acetokinase family. TdcD subfamily. In terms of assembly, homodimer. Requires Mg(2+) as cofactor.

It catalyses the reaction propanoate + ATP = propanoyl phosphate + ADP. The protein operates within amino-acid degradation; L-threonine degradation via propanoate pathway; propanoate from L-threonine: step 4/4. Catalyzes the conversion of propionyl phosphate and ADP to propionate and ATP. The protein is Propionate kinase of Salmonella typhimurium (strain D23580).